The primary structure comprises 126 residues: Protein ApaG (126 aa).

Residues K2 to H126 enclose the ApaG domain.

The polypeptide is Protein ApaG (Shewanella loihica (strain ATCC BAA-1088 / PV-4)).